A 356-amino-acid chain; its full sequence is GDP-mannose 4,6 dehydratase (356 aa).

NADP(+) contacts are provided by residues 12–17 (GITGQD), 69–70 (DL), 91–95 (LGAQS), and Tyr-106. Thr-138 is an active-site residue. Active-site nucleophile residues include Glu-140 and Tyr-162. NADP(+) is bound by residues Lys-166, His-192, and Arg-197.

This sequence belongs to the NAD(P)-dependent epimerase/dehydratase family. GDP-mannose 4,6-dehydratase subfamily. The cofactor is NADP(+).

It carries out the reaction GDP-alpha-D-mannose = GDP-4-dehydro-alpha-D-rhamnose + H2O. It participates in nucleotide-sugar biosynthesis; GDP-L-fucose biosynthesis via de novo pathway; GDP-L-fucose from GDP-alpha-D-mannose: step 1/2. In terms of biological role, participates in the synthesis of GDP-L-fucose, catalyzing the conversion of GDP-D-mannose to GDP-4-dehydro-6-deoxy-D-mannose (GDP-4-dehydro-alpha-D-rhamnose) which is further catalyzed by GDP-L-fucose synthase (ger). GDP-L-fucose is important for the synthesis of fucosylated N-glycans which are expressed on the cell surface. The protein is GDP-mannose 4,6 dehydratase (gmd) of Dictyostelium discoideum (Social amoeba).